A 336-amino-acid chain; its full sequence is uncharacterized protein (336 aa).

Positions 297–316 (KKDLQKSEEEEHPNDDHVYM) are enriched in basic and acidic residues. Positions 297-336 (KKDLQKSEEEEHPNDDHVYMTEEDDMEKIERGIESLGNGH) are disordered.

This is an uncharacterized protein from Invertebrate iridescent virus 6 (IIV-6).